We begin with the raw amino-acid sequence, 247 residues long: Uridylate kinase (247 aa).

Residue 14–17 (KLSG) participates in ATP binding. An involved in allosteric activation by GTP region spans residues 22–27 (GERGVG). Position 56 (G56) interacts with UMP. The ATP site is built by G57 and R61. Residues D76 and 137–144 (IGSPYFST) each bind UMP. ATP is bound by residues N165, Y171, and D174.

The protein belongs to the UMP kinase family. Homohexamer.

It is found in the cytoplasm. The enzyme catalyses UMP + ATP = UDP + ADP. The protein operates within pyrimidine metabolism; CTP biosynthesis via de novo pathway; UDP from UMP (UMPK route): step 1/1. Its activity is regulated as follows. Allosterically activated by GTP. Inhibited by UTP. Catalyzes the reversible phosphorylation of UMP to UDP. The sequence is that of Uridylate kinase from Streptococcus pneumoniae (strain ATCC BAA-255 / R6).